A 432-amino-acid chain; its full sequence is Neuronal pentraxin-1 (432 aa).

The first 22 residues, 1-22 (MLAGRAARTCALLALCLLGSRA), serve as a signal peptide directing secretion. The segment at 90 to 128 (ESQSTLDAGPGEARSGGGRKQPGSGKNTMGDLSRTPASE) is disordered. N-linked (GlcNAc...) asparagine glycans are attached at residues asparagine 154 and asparagine 193. The Pentraxin (PTX) domain maps to 226–428 (DKFQLTFPLR…GATKWTFEAC (203 aa)). Cysteine 256 and cysteine 316 are disulfide-bonded. Residues asparagine 280, glutamate 358, glutamine 359, aspartate 360, and glutamine 370 each contribute to the Ca(2+) site.

As to quaternary structure, homooligomer or heterooligomer (probably pentamer) with neuronal pentraxin receptor (NPTXR). Ca(2+) is required as a cofactor. In terms of processing, glycosylated. In terms of tissue distribution, cerebellum, hippocampus and cerebral cortex.

The protein resides in the secreted. It is found in the cytoplasmic vesicle. It localises to the secretory vesicle. The protein localises to the endoplasmic reticulum. Functionally, may be involved in mediating uptake of synaptic material during synapse remodeling or in mediating the synaptic clustering of AMPA glutamate receptors at a subset of excitatory synapses. The protein is Neuronal pentraxin-1 (Nptx1) of Rattus norvegicus (Rat).